Here is a 268-residue protein sequence, read N- to C-terminus: MEEHPRAWIISVGNELLIGRTINTNAAWLGSRLTLLGFEVERVVTVPDRVEDIAEEVGRALGRARVVITTGGLGPTYDDVTLQGVAMALGRGLKLHPGALEMVRRFYSKRGLGLTEDRVKMAMLPDGAEPLENPVGAAPGAVVEARGSLVASLPGVPSEMEAMFEKALRPLLEEIAPPGAVVECGIAVVGVPESSLAPYIKEASRVSPRVYVKSHPQGSEIGKPLVRVRVLARASTLEEARAEALKALEKVRRGVEELGGSISEEDSC.

Belongs to the CinA family.

The sequence is that of Protein APE_1980.1 from Aeropyrum pernix (strain ATCC 700893 / DSM 11879 / JCM 9820 / NBRC 100138 / K1).